The primary structure comprises 288 residues: ATP synthase subunit a (288 aa).

Helical transmembrane passes span 47–67, 104–124, 157–177, 199–219, 237–257, and 258–278; these read LDSMLWSIGLGIVFCALFWLV, LIAPLALTIFVWIFLMNLMDL, DPNITLGMSFSVFALIIYYSI, PIAKIILIPINFILEFVTLIA, LIFVLIALMPFWIQWALSVPW, and AIFHILIITLQAFVFMMLTIV.

The protein belongs to the ATPase A chain family. In terms of assembly, F-type ATPases have 2 components, CF(1) - the catalytic core - and CF(0) - the membrane proton channel. CF(1) has five subunits: alpha(3), beta(3), gamma(1), delta(1), epsilon(1). CF(0) has three main subunits: a(1), b(2) and c(9-12). The alpha and beta chains form an alternating ring which encloses part of the gamma chain. CF(1) is attached to CF(0) by a central stalk formed by the gamma and epsilon chains, while a peripheral stalk is formed by the delta and b chains.

It localises to the cell inner membrane. Its function is as follows. Key component of the proton channel; it plays a direct role in the translocation of protons across the membrane. The protein is ATP synthase subunit a of Psychrobacter sp. (strain PRwf-1).